The primary structure comprises 352 residues: Phosphoribosylformylglycinamidine cyclo-ligase (352 aa).

The protein belongs to the AIR synthase family.

It is found in the cytoplasm. The enzyme catalyses 2-formamido-N(1)-(5-O-phospho-beta-D-ribosyl)acetamidine + ATP = 5-amino-1-(5-phospho-beta-D-ribosyl)imidazole + ADP + phosphate + H(+). Its pathway is purine metabolism; IMP biosynthesis via de novo pathway; 5-amino-1-(5-phospho-D-ribosyl)imidazole from N(2)-formyl-N(1)-(5-phospho-D-ribosyl)glycinamide: step 2/2. This chain is Phosphoribosylformylglycinamidine cyclo-ligase, found in Pseudomonas fluorescens (strain ATCC BAA-477 / NRRL B-23932 / Pf-5).